A 201-amino-acid polypeptide reads, in one-letter code: MBF complex negative regulatory component yox1 (201 aa).

Polar residues predominate over residues 1–22 (MSLSDSPSKSGNTGKDLISNNE). A disordered region spans residues 1 to 42 (MSLSDSPSKSGNTGKDLISNNEAKNHEDEETHQKKRRRRTTD). The segment covering 23–32 (AKNHEDEETH) has biased composition (basic and acidic residues). Positions 33 to 92 (QKKRRRRTTDAEATLLEQYFLKTPKPSLIERQELSKKLKSSMTPRELQIWFQNKRQSLRR) form a DNA-binding region, homeobox.

As to quaternary structure, component of the MBF transcription factor complex. Phosphorylated in response to hydroxyurea. Phosphorylation inhibits the repressor activity and is dependent on rad3. However, the regulation of yox1 by rad3 is probably indirect.

It localises to the nucleus. Functionally, negative regulatory component of the MBF transcription factor complex involved in cell-cycle G1/S phase-specific gene expression and more particularly DNA replication checkpoint-dependent gene expression. The protein is MBF complex negative regulatory component yox1 (yox1) of Schizosaccharomyces pombe (strain 972 / ATCC 24843) (Fission yeast).